The chain runs to 256 residues: Cell division protein DivIB (256 aa).

At 1–30 (MNNSKVIKLQDRVPKLKNQKKKNKKNVNHR) the chain is on the cytoplasmic side. A helical transmembrane segment spans residues 31-51 (LILYISILFLLVLFLIYFRSP). The Extracellular segment spans residues 52–256 (LSNIKKISVF…KELGAEEKKE (205 aa)). The POTRA domain maps to 53–121 (SNIKKISVFG…NNIDIHIEEY (69 aa)).

It belongs to the FtsQ/DivIB family. DivIB subfamily.

The protein localises to the cell membrane. Its function is as follows. Cell division protein that may be involved in stabilizing or promoting the assembly of the division complex. The sequence is that of Cell division protein DivIB from Bacillus cereus (strain ATCC 14579 / DSM 31 / CCUG 7414 / JCM 2152 / NBRC 15305 / NCIMB 9373 / NCTC 2599 / NRRL B-3711).